The chain runs to 521 residues: Bifunctional purine biosynthesis protein PurH (521 aa).

The MGS-like domain occupies 1–145 (MIKQALISVS…KNHRDVTVVV (145 aa)).

Belongs to the PurH family.

The catalysed reaction is (6R)-10-formyltetrahydrofolate + 5-amino-1-(5-phospho-beta-D-ribosyl)imidazole-4-carboxamide = 5-formamido-1-(5-phospho-D-ribosyl)imidazole-4-carboxamide + (6S)-5,6,7,8-tetrahydrofolate. It catalyses the reaction IMP + H2O = 5-formamido-1-(5-phospho-D-ribosyl)imidazole-4-carboxamide. Its pathway is purine metabolism; IMP biosynthesis via de novo pathway; 5-formamido-1-(5-phospho-D-ribosyl)imidazole-4-carboxamide from 5-amino-1-(5-phospho-D-ribosyl)imidazole-4-carboxamide (10-formyl THF route): step 1/1. It functions in the pathway purine metabolism; IMP biosynthesis via de novo pathway; IMP from 5-formamido-1-(5-phospho-D-ribosyl)imidazole-4-carboxamide: step 1/1. This is Bifunctional purine biosynthesis protein PurH from Burkholderia vietnamiensis (strain G4 / LMG 22486) (Burkholderia cepacia (strain R1808)).